Consider the following 356-residue polypeptide: Protein RecA (356 aa).

68–75 (GQESSGKT) is an ATP binding site.

It belongs to the RecA family.

Its subcellular location is the cytoplasm. In terms of biological role, can catalyze the hydrolysis of ATP in the presence of single-stranded DNA, the ATP-dependent uptake of single-stranded DNA by duplex DNA, and the ATP-dependent hybridization of homologous single-stranded DNAs. It interacts with LexA causing its activation and leading to its autocatalytic cleavage. The chain is Protein RecA from Thermotoga sp. (strain RQ2).